The sequence spans 142 residues: Alpha-lactalbumin (142 aa).

Residues 1–19 (MMSFVSLLLVGILFHATQA) form the signal peptide. Residues 20-142 (EQLTKCEVFQ…KLDQWLCEKL (123 aa)) enclose the C-type lysozyme domain. Disulfide bonds link Cys25-Cys139, Cys47-Cys130, Cys80-Cys96, and Cys92-Cys110. N-linked (GlcNAc...) asparagine glycans are attached at residues Asn64 and Asn93. The Ca(2+) site is built by Lys98, Asp101, Asp103, Asp106, and Asp107.

It belongs to the glycosyl hydrolase 22 family. In terms of assembly, lactose synthase (LS) is a heterodimer of a catalytic component, beta1,4-galactosyltransferase (beta4Gal-T1) and a regulatory component, alpha-lactalbumin (LA). In terms of tissue distribution, mammary gland specific. Secreted in milk.

The protein resides in the secreted. Its function is as follows. Regulatory subunit of lactose synthase, changes the substrate specificity of galactosyltransferase in the mammary gland making glucose a good acceptor substrate for this enzyme. This enables LS to synthesize lactose, the major carbohydrate component of milk. In other tissues, galactosyltransferase transfers galactose onto the N-acetylglucosamine of the oligosaccharide chains in glycoproteins. The protein is Alpha-lactalbumin (LALBA) of Ovis aries (Sheep).